The primary structure comprises 82 residues: Vejovine (82 aa).

A signal peptide spans methionine 1–alanine 22. A propeptide spanning residues methionine 70–aspartate 82 is cleaved from the precursor.

This sequence belongs to the non-disulfide-bridged peptide (NDBP) superfamily. Long chain multifunctional peptide (group 2) family. Expressed by the venom gland.

The protein localises to the secreted. It localises to the target cell membrane. Displays significant potent antimicrobial activity against clinical isolates of Gram-negative multidrug resistant strains of E.coli, P.aeruginosa and A.baumanii with MIC values as low as 4.4 uM. Additionally, it displays low cytolytic and hemolytic activity against human erythrocytes reaching 50% hemolysis at 100 uM. The protein is Vejovine of Vaejovis mexicanus (Mexican scorpion).